The following is a 1244-amino-acid chain: Actin cytoskeleton-regulatory complex protein SLA1 (1244 aa).

SH3 domains are found at residues V3–A68 and P69–G132. Disordered regions lie at residues E128–E248 and D415–S497. Residues A140–A159 show a composition bias toward low complexity. Positions H171–Q184 are enriched in basic and acidic residues. Low complexity predominate over residues A199–A214. The span at N226 to Y235 shows a compositional bias: acidic residues. In terms of domain architecture, SH3 3 spans K353–D415. Residues S429–S447 are compositionally biased toward basic residues. A phosphoserine mark is found at S447, S449, and S454. Glycyl lysine isopeptide (Lys-Gly) (interchain with G-Cter in ubiquitin) cross-links involve residues K471 and K548. Over residues K471–N484 the composition is skewed to basic residues. Disordered stretches follow at residues K558–R592, E610–N649, and P726–S791. Composition is skewed to basic and acidic residues over residues T568–R592 and E610–P621. Positions T629 to N649 are enriched in low complexity. Polar residues predominate over residues P726 to L756. The segment covering P757 to A771 has biased composition (low complexity). The residue at position 799 (S799) is a Phosphoserine. A disordered region spans residues K813–L853. A Phosphothreonine modification is found at T831. Residues V836–A851 show a composition bias toward low complexity. T858 bears the Phosphothreonine mark. Tandem repeats lie at residues T868 to P874, T877 to P883, and T887 to P893. Residues T868–Q1205 are 16 X 7 AA approximate repeats of T-G-G-A-M-M-P. Phosphothreonine occurs at positions 887 and 904. 2 consecutive repeat copies span residues T923 to P929 and T945 to P951. Residues T984 and T993 each carry the phosphothreonine modification. Phosphoserine is present on S996. 5 tandem repeats follow at residues T1003–P1009, T1020–T1026, T1031–P1037, T1048–P1054, and T1065–P1071. At T1075 the chain carries Phosphothreonine. Repeat copies occupy residues T1084–P1090, T1129–T1135, T1155–E1161, T1170–Q1176, T1185–Q1191, and T1200–Q1206.

Belongs to the SLA1 family. In terms of assembly, component of the PAN1 actin cytoskeleton-regulatory complex. Interacts with ABP1, KRE6, LAS17, LSB5, RSP5, RVS167, VPS1 and YSC84. In terms of processing, phosphorylated by PRK1.

The protein localises to the nucleus. The protein resides in the cell membrane. It localises to the endosome membrane. Its subcellular location is the cytoplasm. It is found in the cytoskeleton. The protein localises to the actin patch. Functionally, component of the PAN1 actin cytoskeleton-regulatory complex required for the internalization of endosomes during actin-coupled endocytosis. The complex links the site of endocytosis to the cell membrane-associated actin cytoskeleton. Mediates uptake of external molecules and vacuolar degradation of plasma membrane proteins. Plays a role in the proper organization of the cell membrane-associated actin cytoskeleton and promotes its destabilization. The polypeptide is Actin cytoskeleton-regulatory complex protein SLA1 (SLA1) (Saccharomyces cerevisiae (strain ATCC 204508 / S288c) (Baker's yeast)).